We begin with the raw amino-acid sequence, 443 residues long: C4-dicarboxylate transport protein (443 aa).

9 consecutive transmembrane segments (helical) span residues 17-37 (PFYS…ILLG), 57-77 (LVKM…IAGM), 92-112 (LYFL…ANVV), 139-159 (EQSI…GAFA), 161-181 (GDIL…AMVG), 201-221 (LVGI…AFTI), 234-254 (MLIG…LGAV), 320-340 (IYMT…LSWG), and 368-388 (AATL…ILGI).

Belongs to the dicarboxylate/amino acid:cation symporter (DAACS) (TC 2.A.23) family.

The protein localises to the cell inner membrane. Functionally, responsible for the transport of dicarboxylates such as succinate, fumarate, and malate from the periplasm across the membrane. This is C4-dicarboxylate transport protein from Rhizobium etli (strain ATCC 51251 / DSM 11541 / JCM 21823 / NBRC 15573 / CFN 42).